Here is an 88-residue protein sequence, read N- to C-terminus: Small ribosomal subunit protein bS20 (88 aa).

The disordered stretch occupies residues 1–27 (MANSKSAKKRALQSEKRRQHNASRRSM).

This sequence belongs to the bacterial ribosomal protein bS20 family.

In terms of biological role, binds directly to 16S ribosomal RNA. The sequence is that of Small ribosomal subunit protein bS20 from Shewanella denitrificans (strain OS217 / ATCC BAA-1090 / DSM 15013).